A 61-amino-acid polypeptide reads, in one-letter code: MFTVFLLVVLATTVVSFTSGRSTFRGRNAAAKASGLVSLTDRRPQCCSHPACNVDHPEICR.

The first 20 residues, 1–20, serve as a signal peptide directing secretion; it reads MFTVFLLVVLATTVVSFTSG. Positions 21-42 are excised as a propeptide; that stretch reads RSTFRGRNAAAKASGLVSLTDR. Proline 44 and proline 50 each carry 4-hydroxyproline. Intrachain disulfides connect cysteine 46–cysteine 52 and cysteine 47–cysteine 60. Residues 48–50 are ser-Xaa-Pro motif, crucial for potent interaction with nAChR; sequence SHP.

The protein belongs to the conotoxin A superfamily. As to expression, expressed by the venom duct.

The protein localises to the secreted. In terms of biological role, alpha-conotoxins act on postsynaptic membranes, they bind to the nicotinic acetylcholine receptors (nAChR) and thus inhibit them. This toxin also inhibits high voltage-activated (HVA) calcium channel currents in rat DRG neurons (8% inhibition at 1 uM toxin) probably by activating GABA(B) receptors (GABBR1 and/or GABBR2). This chain is Alpha-conotoxin-like Tx1.2, found in Conus textile (Cloth-of-gold cone).